The sequence spans 301 residues: Probable alpha-L-glutamate ligase (301 aa).

The region spanning 104 to 287 is the ATP-grasp domain; that stretch reads LQLLSRKGVG…VAGRIVSFIE (184 aa). Residues lysine 141, 178-179, aspartate 187, and 211-213 contribute to the ATP site; these read EF and RSN. 3 residues coordinate Mg(2+): aspartate 248, glutamate 260, and asparagine 262. Residues aspartate 248, glutamate 260, and asparagine 262 each coordinate Mn(2+).

Belongs to the RimK family. Requires Mg(2+) as cofactor. Mn(2+) is required as a cofactor.

This Thioalkalivibrio sulfidiphilus (strain HL-EbGR7) protein is Probable alpha-L-glutamate ligase.